The following is a 434-amino-acid chain: CC-adding tRNA nucleotidyltransferase (434 aa).

19 to 22 provides a ligand contact to CTP; sequence GAVR. Mg(2+) is bound by residues aspartate 32 and aspartate 34. CTP is bound by residues 90–91, asparagine 95, 130–139, and arginine 175; these read RD and DHLRSLRGVR.

Belongs to the tRNA nucleotidyltransferase/poly(A) polymerase family. Mg(2+) serves as cofactor.

The enzyme catalyses a tRNA precursor + 2 CTP = a tRNA with a 3' CC end + 2 diphosphate. TRNA nucleotidyltransferase involved in the synthesis of the tRNA CCA terminus. Adds the two cytidine residues to tRNA. This chain is CC-adding tRNA nucleotidyltransferase, found in Thermus thermophilus (strain ATCC BAA-163 / DSM 7039 / HB27).